Reading from the N-terminus, the 28-residue chain is Small integral membrane protein 47 (28 aa).

The chain crosses the membrane as a helical span at residues 7-24; the sequence is VTLAMALFTILTSIYFFN.

Its subcellular location is the membrane. This chain is Small integral membrane protein 47, found in Homo sapiens (Human).